The following is a 406-amino-acid chain: Putative 12-oxophytodienoate reductase 12 (406 aa).

FMN-binding positions include 41 to 43 (PLT), alanine 74, and glutamine 119. Substrate is bound at residue 188–191 (HAAN). FMN-binding positions include arginine 240, glycine 317, and 338-339 (GR).

This sequence belongs to the NADH:flavin oxidoreductase/NADH oxidase family. Requires FMN as cofactor.

Putative oxophytodienoate reductase that may be involved in the biosynthesis or metabolism of oxylipin signaling molecules. This is Putative 12-oxophytodienoate reductase 12 (OPR12) from Oryza sativa subsp. japonica (Rice).